Reading from the N-terminus, the 363-residue chain is Fructose-bisphosphate aldolase A (363 aa).

A beta-D-fructose 1,6-bisphosphate-binding site is contributed by Arg43. Glu188 acts as the Proton acceptor in catalysis. The Schiff-base intermediate with dihydroxyacetone-P role is filled by Lys230. Beta-D-fructose 1,6-bisphosphate is bound by residues 272 to 274, Ser301, and Arg304; that span reads SGG.

Belongs to the class I fructose-bisphosphate aldolase family. In terms of assembly, tetramer.

It carries out the reaction beta-D-fructose 1,6-bisphosphate = D-glyceraldehyde 3-phosphate + dihydroxyacetone phosphate. It functions in the pathway carbohydrate degradation; glycolysis; D-glyceraldehyde 3-phosphate and glycerone phosphate from D-glucose: step 4/4. Its function is as follows. Plays a key role in glycolysis and gluconeogenesis. The polypeptide is Fructose-bisphosphate aldolase A (Salmo salar (Atlantic salmon)).